Here is a 909-residue protein sequence, read N- to C-terminus: E3 ubiquitin-protein ligase HACE1 (909 aa).

Residues 1 to 21 are N-terminal helix important for homodimerization; the sequence is MERAMEQLNRLTRSLRRARTV. 7 ANK repeats span residues 23-55, 64-93, 97-126, 130-159, 163-192, 196-226, and 228-253; these read LPDD…NSKF, VKRS…NPNY, SGCT…DVNI, EGLT…DVDV, MGQT…DINR, SGAT…YLSD, and NGVT…QYHP. A disordered region spans residues 396–433; sequence KGQDQDGTSIPPFEPPGPGSYENLSTGTGESKPDVLGG. In terms of domain architecture, HECT spans 574-909; the sequence is NCAKLKQGIA…HCGSYGYTMA (336 aa). Residue Cys-876 is the Glycyl thioester intermediate of the active site.

In terms of assembly, homodimer. The homodimer is autoinhibited and stabilized by its N-terminal helix. Interacts with RAB1 (RAB1A, RAB1B or RAB1C), RAB4 (RAB4A or RAB4B) and RAB11 (RAB11A or RAB11B); in a GTP-dependent manner. Interacts with the 26S proteasomal complex through the 20S core proteasomal subunit. Interacts with RARB. Autoubiquitinated.

Its subcellular location is the golgi apparatus. The protein localises to the golgi stack membrane. The protein resides in the cytoplasm. It localises to the endoplasmic reticulum. It carries out the reaction S-ubiquitinyl-[E2 ubiquitin-conjugating enzyme]-L-cysteine + [acceptor protein]-L-lysine = [E2 ubiquitin-conjugating enzyme]-L-cysteine + N(6)-ubiquitinyl-[acceptor protein]-L-lysine.. The protein operates within protein modification; protein ubiquitination. In terms of biological role, E3 ubiquitin-protein ligase involved in Golgi membrane fusion and regulation of small GTPases. Acts as a regulator of Golgi membrane dynamics during the cell cycle: recruited to Golgi membrane by Rab proteins and regulates postmitotic Golgi membrane fusion. Acts by mediating ubiquitination during mitotic Golgi disassembly, ubiquitination serving as a signal for Golgi reassembly later, after cell division. Specifically binds GTP-bound RAC1, mediating ubiquitination and subsequent degradation of active RAC1, thereby playing a role in host defense against pathogens. May also act as a transcription regulator via its interaction with RARB. This is E3 ubiquitin-protein ligase HACE1 (HACE1) from Bos taurus (Bovine).